Consider the following 349-residue polypeptide: MIEFDNLTYLHGKPQGTGLLKANPEDFVVVEDLGFEPDGEGEHILVRILKNGCNTRFVADALAKFLKIHAREVSFAGQKDKHAVTEQWLCARVPGKEIPDLSAFQLEGCQVLEYARHKRKLRLGALKGNAFTLVLREVSNRDDVEQRLIDICVKGVPNYFGAQRFGIGGSNLQGALRWAQTNTPVRDRNKRSFWLSAARSALFNQIVAERLKKADVNQVVDGDALQLAGRGSWFVATTEELAELQRRVNDKELMITAALPGSGEWGTQREALAFEQAAVAAETELQALLVREKVEAARRAMLLYPQQLSWNWWDDVTVEIRFWLPAGSFATSVVRELINTTGDYAHIAE.

F27 lines the substrate pocket. Catalysis depends on D80, which acts as the Nucleophile. Position 129 (N129) interacts with substrate. The 149-residue stretch at 155–303 folds into the TRUD domain; sequence GVPNYFGAQR…VEAARRAMLL (149 aa). F329 provides a ligand contact to substrate.

It belongs to the pseudouridine synthase TruD family.

It catalyses the reaction uridine(13) in tRNA = pseudouridine(13) in tRNA. Responsible for synthesis of pseudouridine from uracil-13 in transfer RNAs. This Escherichia coli O7:K1 (strain IAI39 / ExPEC) protein is tRNA pseudouridine synthase D.